The sequence spans 408 residues: Probable 2,3-bisphosphoglycerate-independent phosphoglycerate mutase (408 aa).

Belongs to the BPG-independent phosphoglycerate mutase family. A-PGAM subfamily.

The catalysed reaction is (2R)-2-phosphoglycerate = (2R)-3-phosphoglycerate. It functions in the pathway carbohydrate degradation; glycolysis; pyruvate from D-glyceraldehyde 3-phosphate: step 3/5. In terms of biological role, catalyzes the interconversion of 2-phosphoglycerate and 3-phosphoglycerate. The protein is Probable 2,3-bisphosphoglycerate-independent phosphoglycerate mutase of Deinococcus geothermalis (strain DSM 11300 / CIP 105573 / AG-3a).